Here is a 627-residue protein sequence, read N- to C-terminus: tRNA uridine 5-carboxymethylaminomethyl modification enzyme MnmG (627 aa).

Residues 13–18 (GGGHAG), V125, and S180 contribute to the FAD site. Residue 274–288 (GPRYCPSIEDKVVRF) participates in NAD(+) binding. Q371 serves as a coordination point for FAD.

Belongs to the MnmG family. In terms of assembly, homodimer. Heterotetramer of two MnmE and two MnmG subunits. Requires FAD as cofactor.

The protein resides in the cytoplasm. Functionally, NAD-binding protein involved in the addition of a carboxymethylaminomethyl (cmnm) group at the wobble position (U34) of certain tRNAs, forming tRNA-cmnm(5)s(2)U34. The sequence is that of tRNA uridine 5-carboxymethylaminomethyl modification enzyme MnmG from Francisella philomiragia subsp. philomiragia (strain ATCC 25017 / CCUG 19701 / FSC 153 / O#319-036).